The chain runs to 442 residues: MDRSRTSSQGRDVLPPRGDEGRISPSLDKEKSPGPEDQPDAPPDGGLTAWLVVVGAWCTSFCSFGWVNSVGIFQNYYESHLLKHLSSSTISWIPSLQIFFMFAMGPIVGKLYDTFGARYLIIGGTFFHVFGLMMASISTQYYQLLLSQGICSAIGAAAIFQPALSAVSAWFNRKRGIAFATLSTGSSVGGVIFPIMVDRLIAKVGFGWSMRISAFMILFLLGIAIVTVKARRPPPQGPKPSGVQLLQPFKEPVFIVTLLGYMLLTYGVFIPINYVIVQAVASGMNADLASYLVPMLNGASLFGRLGAGFMSDRYGRYNIFIVMCIVAGVLVLALWIPATSNAPIIVFATLFGFASGAYVSLSPALIAQISPLKEVGYRTGLLFLFASVGGLTTSPIAGAILQNAGGDYTHMKIFSGVMLLGGTAFIITARIVGTGLKLVVKY.

The span at 1 to 10 (MDRSRTSSQG) shows a compositional bias: polar residues. A disordered region spans residues 1–43 (MDRSRTSSQGRDVLPPRGDEGRISPSLDKEKSPGPEDQPDAPP). Over residues 17 to 34 (RGDEGRISPSLDKEKSPG) the composition is skewed to basic and acidic residues. Helical transmembrane passes span 47–67 (LTAWLVVVGAWCTSFCSFGWV), 89–109 (TISWIPSLQIFFMFAMGPIVG), 119–139 (YLIIGGTFFHVFGLMMASIST), 150–170 (ICSAIGAAAIFQPALSAVSAW), 177–197 (IAFATLSTGSSVGGVIFPIMV), 206–226 (FGWSMRISAFMILFLLGIAIV), 252–272 (PVFIVTLLGYMLLTYGVFIPI), 288–307 (LASYLVPMLNGASLFGRLGA), 319–339 (IFIVMCIVAGVLVLALWIPAT), 342–362 (APIIVFATLFGFASGAYVSLS), 381–401 (LLFLFASVGGLTTSPIAGAIL), and 413–433 (IFSGVMLLGGTAFIITARIVG).

Belongs to the major facilitator superfamily. Monocarboxylate porter (TC 2.A.1.13) family.

The protein localises to the cell membrane. It functions in the pathway secondary metabolite biosynthesis. MFS transporter; part of the gene cluster that mediates the biosynthesis of aspergillic acid. Probably involved in aspergillic acid metabolism and transport. This chain is MFS transporter asaE, found in Aspergillus flavus (strain ATCC 200026 / FGSC A1120 / IAM 13836 / NRRL 3357 / JCM 12722 / SRRC 167).